Here is a 497-residue protein sequence, read N- to C-terminus: Validamine 7-phosphate valienyltransferase (497 aa).

Residue D158 participates in GDP-valienol binding. Validamine 7-phosphate is bound at residue H182. Residues R290, K295, R321, 325 to 326 (NR), 361 to 362 (ND), and T366 each bind GDP-valienol. 383–386 (DGQN) contributes to the validamine 7-phosphate binding site. Residues 387–388 (LS) and E391 contribute to the GDP-valienol site.

Belongs to the glycosyltransferase 20 family. In terms of assembly, homodimer.

It catalyses the reaction validamine 7-phosphate + GDP-valienol = validoxylamine A 7'-phosphate + GDP + H(+). Its function is as follows. Involved in the biosynthesis of the antifungal agent validamycin A. Catalyzes the condensation between GDP-valienol and validamine 7-phosphate via a nonglycosidic C-N bond formation to yield validoxylamine A 7'-phosphate. The chain is Validamine 7-phosphate valienyltransferase from Streptomyces hygroscopicus subsp. limoneus.